Reading from the N-terminus, the 354-residue chain is MKIFVINPGSTSTKIALFIDEKPVWAAGAHHTADDLSEFHHVNEQYAYRKDFVLRLLAEADIPLDFDAVIARGGLLKPTPGGVYAINEQMKHDLLNARMEHACNLGALIADEIARECHCPAYIADPEVVDELQPAARLTGIPEIERISIFHALNSKAVSRKYAASIGKHYEELNLIVVHLGGGISVGAHCKGRVIDVNNALNGEGPFSPERAGTIPADQLAELCFSGKYTLKQIKKMLNGKGGLTAHLGMNDVVTIARKASEGEEPYKGVLDAMLYTVAKQAGAMYVTLRGQVDAIILTGGIAHSDYCVGILKEQIDYLAPVVLMPGEDEMGSLAYNALGALKGELPLQVYRPE.

It belongs to the acetokinase family.

The protein localises to the cytoplasm. It catalyses the reaction butanoate + ATP = butanoyl phosphate + ADP. In Phocaeicola vulgatus (strain ATCC 8482 / DSM 1447 / JCM 5826 / CCUG 4940 / NBRC 14291 / NCTC 11154) (Bacteroides vulgatus), this protein is Probable butyrate kinase.